A 908-amino-acid polypeptide reads, in one-letter code: Metabotropic glutamate receptor 8 (908 aa).

The N-terminal stretch at Met1–Ser33 is a signal peptide. The Extracellular segment spans residues Gln34–Trp583. The cysteines at positions 64 and 106 are disulfide-linked. Residue Asn95 is glycosylated (N-linked (GlcNAc...) asparagine). L-glutamate contacts are provided by residues Ser156, Ala177–Thr179, and Tyr227. Cystine bridges form between Cys246–Cys534, Cys369–Cys384, Cys424–Cys431, Cys516–Cys535, Cys520–Cys538, Cys541–Cys553, and Cys556–Cys569. Asn298 carries N-linked (GlcNAc...) asparagine glycosylation. Residue Asp309 coordinates L-glutamate. Lys401 lines the L-glutamate pocket. N-linked (GlcNAc...) asparagine glycans are attached at residues Asn452 and Asn480. An N-linked (GlcNAc...) asparagine glycan is attached at Asn565. The chain crosses the membrane as a helical span at residues Ala584–Tyr608. Residues Asn609 to Glu620 are Cytoplasmic-facing. The chain crosses the membrane as a helical span at residues Leu621 to Ala641. Residues Ala642–Ile647 are Extracellular-facing. A helical membrane pass occupies residues Cys648–Thr668. At Lys669–Gln695 the chain is on the cytoplasmic side. A helical transmembrane segment spans residues Leu696–Val716. Topologically, residues Asp717–Asp746 are extracellular. Residues Leu747–Ile768 traverse the membrane as a helical segment. At Lys769–Lys781 the chain is on the cytoplasmic side. Residues Pro782–Gly803 form a helical membrane-spanning segment. Residues Thr804–Leu818 are Extracellular-facing. A helical transmembrane segment spans residues Thr819–Phe843. The Cytoplasmic segment spans residues His844–Ile908. Lys882 is covalently cross-linked (Glycyl lysine isopeptide (Lys-Gly) (interchain with G-Cter in SUMO1)).

The protein belongs to the G-protein coupled receptor 3 family. Interacts with PICK1.

Its subcellular location is the cell membrane. G-protein coupled receptor for glutamate. Ligand binding causes a conformation change that triggers signaling via guanine nucleotide-binding proteins (G proteins) and modulates the activity of down-stream effectors, such as adenylate cyclase. Signaling inhibits adenylate cyclase activity. This is Metabotropic glutamate receptor 8 (GRM8) from Homo sapiens (Human).